A 219-amino-acid polypeptide reads, in one-letter code: Ras-related protein Rab-32A (219 aa).

22 to 29 provides a ligand contact to GTP; sequence GDIGTGKT. Positions 44-52 match the Effector region motif; it reads YKSTIGVDF. Residues 71–75 and 134–137 contribute to the GTP site; these read DIAGQ and NKCD. Residues 192–219 are disordered; it reads NQPIEGTIQPGDLNKQPQPTSTGPSCCK. Positions 206 to 219 are enriched in polar residues; that stretch reads KQPQPTSTGPSCCK. 2 S-geranylgeranyl cysteine lipidation sites follow: Cys217 and Cys218.

Belongs to the small GTPase superfamily. Rab family.

The protein is Ras-related protein Rab-32A (rab32A) of Dictyostelium discoideum (Social amoeba).